Here is a 107-residue protein sequence, read N- to C-terminus: Large ribosomal subunit protein uL24 (107 aa).

It belongs to the universal ribosomal protein uL24 family. Part of the 50S ribosomal subunit.

Functionally, one of two assembly initiator proteins, it binds directly to the 5'-end of the 23S rRNA, where it nucleates assembly of the 50S subunit. One of the proteins that surrounds the polypeptide exit tunnel on the outside of the subunit. This is Large ribosomal subunit protein uL24 from Kosmotoga olearia (strain ATCC BAA-1733 / DSM 21960 / TBF 19.5.1).